The chain runs to 354 residues: Stearoyl-CoA desaturase (354 aa).

Residues 1 to 28 form a disordered region; the sequence is MPGHLLQEEMTSSYTTTTTTITEPPSES. Over 1–67 the chain is Cytoplasmic; that stretch reads MPGHLLQEEM…EGPPPKLEYV (67 aa). Positions 8–28 are enriched in low complexity; sequence EEMTSSYTTTTTTITEPPSES. The chain crosses the membrane as a helical span at residues 68–88; that stretch reads WRNIILMALLHLGALYGLVLV. Asparagine 70 lines the substrate pocket. The Lumenal segment spans residues 89–92; sequence PSSK. Residues 93–113 form a helical membrane-spanning segment; it reads VYTLLWAFVYYVISIEGIGAG. At 114-212 the chain is on the cytoplasmic side; it reads VHRLWSHRTY…EKLVMFQRRY (99 aa). Residues histidine 115 and histidine 120 each contribute to the Fe cation site. The Histidine box-1 motif lies at 115–120; it reads HRLWSH. Residues asparagine 143, arginine 150, and aspartate 151 each coordinate substrate. Histidine 152, histidine 155, and histidine 156 together coordinate Fe cation. The short motif at 152–156 is the Histidine box-2 element; the sequence is HRAHH. Substrate-binding residues include arginine 183 and lysine 184. Serine 198 carries the phosphoserine modification. A helical membrane pass occupies residues 213 to 232; the sequence is YKPAILLMCFILPTFVPWYF. Over 233 to 236 the chain is Lumenal; it reads WGEA. Residues 237–258 traverse the membrane as a helical segment; the sequence is FVNSLCVSTFLRYTLVLNATWL. Tryptophan 257 contributes to the substrate binding site. At 259 to 354 the chain is on the cytoplasmic side; that stretch reads VNSAAHLYGY…RTGDGSCKSG (96 aa). Residues histidine 264, histidine 293, histidine 296, and histidine 297 each contribute to the Fe cation site. The short motif at 293 to 297 is the Histidine box-3 element; sequence HNYHH.

This sequence belongs to the fatty acid desaturase type 1 family. The cofactor is Fe(2+).

It is found in the endoplasmic reticulum membrane. The catalysed reaction is octadecanoyl-CoA + 2 Fe(II)-[cytochrome b5] + O2 + 2 H(+) = (9Z)-octadecenoyl-CoA + 2 Fe(III)-[cytochrome b5] + 2 H2O. It catalyses the reaction hexadecanoyl-CoA + 2 Fe(II)-[cytochrome b5] + O2 + 2 H(+) = (9Z)-hexadecenoyl-CoA + 2 Fe(III)-[cytochrome b5] + 2 H2O. Stearoyl-CoA desaturase that utilizes O(2) and electrons from reduced cytochrome b5 to introduce the first double bond into saturated fatty acyl-CoA substrates. Catalyzes the insertion of a cis double bond at the delta-9 position into fatty acyl-CoA substrates including palmitoyl-CoA and stearoyl-CoA. Gives rise to a mixture of 16:1 and 18:1 unsaturated fatty acids. Plays an important role in lipid biosynthesis. Plays an important role in regulating the expression of genes that are involved in lipogenesis and in regulating mitochondrial fatty acid oxidation. Plays an important role in body energy homeostasis. Contributes to the biosynthesis of membrane phospholipids, cholesterol esters and triglycerides. The protein is Stearoyl-CoA desaturase (SCD) of Mesocricetus auratus (Golden hamster).